A 338-amino-acid polypeptide reads, in one-letter code: Glyceraldehyde-3-phosphate dehydrogenase 2 (338 aa).

NAD(+) is bound by residues threonine 13–isoleucine 14 and glycine 111. D-glyceraldehyde 3-phosphate is bound at residue serine 140–asparagine 142. Cysteine 141 functions as the Nucleophile in the catalytic mechanism. Residue arginine 169 coordinates NAD(+). Position 195–196 (histidine 195–glycine 196) interacts with D-glyceraldehyde 3-phosphate. Glutamine 300 provides a ligand contact to NAD(+).

This sequence belongs to the glyceraldehyde-3-phosphate dehydrogenase family. Homotetramer.

It is found in the cytoplasm. It carries out the reaction D-glyceraldehyde 3-phosphate + phosphate + NADP(+) = (2R)-3-phospho-glyceroyl phosphate + NADPH + H(+). The catalysed reaction is D-glyceraldehyde 3-phosphate + phosphate + NAD(+) = (2R)-3-phospho-glyceroyl phosphate + NADH + H(+). The protein operates within carbohydrate degradation; glycolysis; pyruvate from D-glyceraldehyde 3-phosphate: step 1/5. This is Glyceraldehyde-3-phosphate dehydrogenase 2 from Methanosarcina barkeri (strain Fusaro / DSM 804).